Reading from the N-terminus, the 222-residue chain is MEWSESVFDGRRREMVEGLRRSGIMNARVLEAFLEVRRHLFFPESEREHAYDDAAWPIGHGQTISQPYTVAYMTSLLADRVPSGKVLEVGTGSGYQSAILDAMGYRVFTIERVAALYSEALGRFRRFALPVAAKLGDGSEGWPEEAPFNAVLVTAAAPKEPEALLRQLSDNGCLVIPLGGMDVQQMTVITRRGEVFLKERYHEFAFVPLIGREGWEEEQEQS.

S65 is a catalytic residue.

This sequence belongs to the methyltransferase superfamily. L-isoaspartyl/D-aspartyl protein methyltransferase family.

It localises to the cytoplasm. It catalyses the reaction [protein]-L-isoaspartate + S-adenosyl-L-methionine = [protein]-L-isoaspartate alpha-methyl ester + S-adenosyl-L-homocysteine. Catalyzes the methyl esterification of L-isoaspartyl residues in peptides and proteins that result from spontaneous decomposition of normal L-aspartyl and L-asparaginyl residues. It plays a role in the repair and/or degradation of damaged proteins. The sequence is that of Protein-L-isoaspartate O-methyltransferase from Chlorobium luteolum (strain DSM 273 / BCRC 81028 / 2530) (Pelodictyon luteolum).